A 425-amino-acid polypeptide reads, in one-letter code: UPF0597 protein KPN78578_43500 (425 aa).

It belongs to the UPF0597 family.

The sequence is that of UPF0597 protein KPN78578_43500 from Klebsiella pneumoniae subsp. pneumoniae (strain ATCC 700721 / MGH 78578).